The sequence spans 376 residues: PCM7-4 (376 aa).

In terms of biological role, has antibacterial activity against Listeria monocytogenes. This chain is PCM7-4, found in Bacillus velezensis.